Consider the following 158-residue polypeptide: Curculin-2 (158 aa).

The signal sequence occupies residues Met1 to Ala22. Residues Asp23 to Cys131 form the Bulb-type lectin domain. Cys51 and Cys74 are disulfide-bonded. Asn103 carries an N-linked (GlcNAc...) asparagine glycan. Positions Gly136–Asn158 are excised as a propeptide.

In terms of assembly, heterodimer with curculin-1; Disulfide-linked.

Functionally, taste-modifying protein; sweet-tasting. After curculin, water elicits a sweet taste, and sour substances induce a stronger sense of sweetness. The polypeptide is Curculin-2 (Molineria latifolia (Lumbah)).